The sequence spans 636 residues: MSGETLEFQAEARQLLQLMVHSIYSNKDVFLRELISNASDALDKLRLASMRDKDLDVDTSDLHIAIEVDQDARTLTVRDNGIGMTRDEVVQVIGTIAKSGTAELLRKLRETTDAETSQELIGQFGVGFYAAFMVADRVVLVTRQAGEADGTHWESSGEGTYTIAPATDVPQGTAVTLHLKPVDSEDNLHDYAAEWTIRQIVKRYSDFIAHPIRMAVERPGSDDSEPTTEVQTLNSMKALWARPRDEVEPAEYHEFYKHVSHDWADPLEVVHMRGEGTFEYEALLFLPTHAPLDLFSPQGRRGVQLYVKRVFIMDDCEALMPGYLRFVKGVVDAHDLSLNISRELLQQDRQIQVVRRRLVKKVLATVKDLKANQPEKYRTFWTEFGAVVKEGLIDDTENRDSLLEILSVASTHDPAEPTDLTGYVNRMKDGQSEIYYATGENRTTIENSPHMEAFRAKGFEVLLLTDPVDEVWVERVGEYDGKTLRSVAKGQVDLDTDEERSAAEAERERQRTEYADLLTWLGSALADQVREVRLSARLTTSPACVVGDAHDVTPTLEKMYRAMGHEVPQVKRILELNPTHPLVSGLRKAREQGATEDSLTETAELLYGMALLAEGGELADPSRFTRILAERLARTL.

Positions 1-342 are a; substrate-binding; the sequence is MSGETLEFQA…AHDLSLNISR (342 aa). The b stretch occupies residues 343–558; sequence ELLQQDRQIQ…AHDVTPTLEK (216 aa). Residues 559 to 636 are c; the sequence is MYRAMGHEVP…ILAERLARTL (78 aa).

The protein belongs to the heat shock protein 90 family. Homodimer.

The protein resides in the cytoplasm. Its function is as follows. Molecular chaperone. Has ATPase activity. The chain is Chaperone protein HtpG from Salinispora arenicola (strain CNS-205).